Here is a 734-residue protein sequence, read N- to C-terminus: MASRFPKFSQGLAQDPTTRRIWFGIATAHDFESHDDITEERLYHKIFASHFGQLAIIFLWTSGNLFHVAWQGNFEAWVRDPLHVRPIAHAIWDPHFGQPAIEAFTRGGAPGPVNIAYSGVYQWWYTIGLRTNEDLYAGALFLLFLSVIFLIAGRLHLQPKWRPSVSWFKNAESRLNHHLSGLFGVSSLAWTGHLVHVAIPESRGVHVRWDNFLDELPHPQGLEPFFTGQWNLYAQNPDSSSHLFGTSQGAGTAILTLLGGFHPQTQSLWLTDMAHHHLAIAFVFSIAGHMYRTNFGIGHSMEDILEAHVPPGGLLGRGHKGLYNTINNSLHFQLGLALASLGVITSLVAQHMYSLPAYAFIAQDFTTQAALYTHHQYIAGFIMTGAFAHGAIFLIRDYNPEQNKDNVLARMLEHKEAIISHLSWVSLLLGFHTLGLYVHNDVMLAFGTPEKQILIEPIFAQWIQSAHGKTLYGFDILLSSTSGPAFDAGKSIWLPGWLNAINDNNNSLFSTIGPGDFLVHHAIALGLHTTTLILVKGALDARGSRLMPDKKDFGYSFPCDGPGRGGTCDISAWDAFYLAVFWMLNTIGWVTFYWHWKHITLWQGNVAQFNESSTYLMGWSRDYLWLNSSQLINGYNPFGMNSLSVWAWMFLFGHLVWATGFMFLISWRGYWQELIETLAWAHERTPLANLVRWRDKPVALSIVQARLVGLAHFSVGYIFTYAAFLIASTSGKFG.

8 consecutive transmembrane segments (helical) span residues 46–69, 135–158, 175–199, 273–291, 330–353, 369–395, 417–439, and 517–535; these read IFAS…FHVA, LYAG…LHLQ, LNHH…HVAI, MAHH…GHMY, LHFQ…QHMY, AALY…IFLI, AIIS…LYVH, and FLVH…LILV. The [4Fe-4S] cluster site is built by cysteine 559 and cysteine 568. Transmembrane regions (helical) follow at residues 575–596 and 643–665; these read AFYL…YWHW and LSVW…MFLI. Histidine 654, methionine 662, and tyrosine 670 together coordinate chlorophyll a. Tryptophan 671 is a binding site for phylloquinone. A helical transmembrane segment spans residues 707–727; the sequence is LVGLAHFSVGYIFTYAAFLIA.

Belongs to the PsaA/PsaB family. In terms of assembly, the PsaA/B heterodimer binds the P700 chlorophyll special pair and subsequent electron acceptors. PSI consists of a core antenna complex that captures photons, and an electron transfer chain that converts photonic excitation into a charge separation. The eukaryotic PSI reaction center is composed of at least 11 subunits. It depends on P700 is a chlorophyll a/chlorophyll a' dimer, A0 is one or more chlorophyll a, A1 is one or both phylloquinones and FX is a shared 4Fe-4S iron-sulfur center. as a cofactor.

The protein resides in the plastid. It localises to the chloroplast thylakoid membrane. The enzyme catalyses reduced [plastocyanin] + hnu + oxidized [2Fe-2S]-[ferredoxin] = oxidized [plastocyanin] + reduced [2Fe-2S]-[ferredoxin]. Functionally, psaA and PsaB bind P700, the primary electron donor of photosystem I (PSI), as well as the electron acceptors A0, A1 and FX. PSI is a plastocyanin-ferredoxin oxidoreductase, converting photonic excitation into a charge separation, which transfers an electron from the donor P700 chlorophyll pair to the spectroscopically characterized acceptors A0, A1, FX, FA and FB in turn. Oxidized P700 is reduced on the lumenal side of the thylakoid membrane by plastocyanin. The polypeptide is Photosystem I P700 chlorophyll a apoprotein A2 (Pinus koraiensis (Korean pine)).